Consider the following 329-residue polypeptide: Small ribosomal subunit protein RACK1 (329 aa).

WD repeat units lie at residues 19–59 (GHNG…ATSP), 68–107 (GHSH…STRL), 110–149 (GHTQ…KFTL), 154–193 (AHQD…CNHT), 196–235 (DHTG…PLYK), 237–275 (EARN…VLAE), and 295–328 (PKAP…KSSS).

It belongs to the WD repeat G protein beta family. Ribosomal protein RACK1 subfamily.

The protein is Small ribosomal subunit protein RACK1 (gpbB) of Dictyostelium discoideum (Social amoeba).